A 190-amino-acid chain; its full sequence is Recombination protein RecR (190 aa).

The C4-type zinc-finger motif lies at 58–73 (CEQCGALSENELCEIC). The Toprim domain occupies 81 to 167 (NILCIVESPK…TFSKIAQGIP (87 aa)).

This sequence belongs to the RecR family.

May play a role in DNA repair. It seems to be involved in an RecBC-independent recombinational process of DNA repair. It may act with RecF and RecO. The chain is Recombination protein RecR from Campylobacter jejuni subsp. doylei (strain ATCC BAA-1458 / RM4099 / 269.97).